A 287-amino-acid chain; its full sequence is UBX domain-containing protein 1 (287 aa).

The 42-residue stretch at 1–42 (MAECSTLESLIEMGFSPSRAEKALAATGNQGIEPAMDWLVEH) folds into the UBA domain. The tract at residues 44 to 207 (DDPDIDEPSV…VQEPPTKKEY (164 aa)) is disordered. Basic and acidic residues-rich tracts occupy residues 72-114 (CEER…EQEK) and 129-169 (KIQE…ERAR). The stretch at 72–164 (CEERLPLTEE…RVREKIARDK (93 aa)) forms a coiled coil. The segment covering 176 to 197 (SEPISPPAEASIPATTPSPSSP) has biased composition (low complexity). The region spanning 205–284 (KEYDQCRIQV…GLVPSAVLIV (80 aa)) is the UBX domain.

Its subcellular location is the cytoplasm. In terms of biological role, component of a complex required to couple deglycosylation and proteasome-mediated degradation of misfolded proteins in the endoplasmic reticulum that are retrotranslocated in the cytosol. Involved in ubiquitin-proteasome systems. In Xenopus tropicalis (Western clawed frog), this protein is UBX domain-containing protein 1 (ubxn1).